The chain runs to 245 residues: tRNA1(Val) (adenine(37)-N6)-methyltransferase (245 aa).

It belongs to the methyltransferase superfamily. tRNA (adenine-N(6)-)-methyltransferase family.

It is found in the cytoplasm. It catalyses the reaction adenosine(37) in tRNA1(Val) + S-adenosyl-L-methionine = N(6)-methyladenosine(37) in tRNA1(Val) + S-adenosyl-L-homocysteine + H(+). Functionally, specifically methylates the adenine in position 37 of tRNA(1)(Val) (anticodon cmo5UAC). This Shigella dysenteriae serotype 1 (strain Sd197) protein is tRNA1(Val) (adenine(37)-N6)-methyltransferase.